The sequence spans 268 residues: Early nodulin-20 (268 aa).

The N-terminal stretch at 1-24 (MSSSSPILLMFIFSIWMLISYSES) is a signal peptide. Residues 25–129 (TDYLVGDSEN…GLKLAVVVMV (105 aa)) form the Phytocyanin domain. Asparagine 67 is a glycosylation site (N-linked (GlcNAc...) asparagine). Cysteine 83 and cysteine 117 are disulfide-bonded. Pro residues-rich tracts occupy residues 134–145 (SSPPPPPSPPTP) and 160–185 (PSPPSPSPSPSPSPSPSPSPRSTPIP). Residues 134–253 (SSPPPPPSPP…SGSKGGGAGH (120 aa)) form a disordered region. Over residues 199–235 (PSLSKSPSPSESPSLAPSPSDSVASLAPSSSPSDESP) the composition is skewed to low complexity. Serine 243 carries GPI-anchor amidated serine lipidation. A propeptide spans 244–268 (SGSKGGGAGHGFLEVSIAMMMFLIF) (removed in mature form).

This sequence belongs to the early nodulin-like (ENODL) family.

It localises to the cell membrane. Its function is as follows. May act as a carbohydrate transporter. In Medicago truncatula (Barrel medic), this protein is Early nodulin-20.